A 170-amino-acid polypeptide reads, in one-letter code: Type II secretion system protein H (170 aa).

Positions 1 to 5 are cleaved as a propeptide — leader sequence; that stretch reads MRQRG. N-methylphenylalanine is present on phenylalanine 6. The chain crosses the membrane as a helical span at residues 6 to 29; it reads FTLLEMMLILLLMGVSAGMVLLAF.

It belongs to the GSP H family. As to quaternary structure, type II secretion is composed of four main components: the outer membrane complex, the inner membrane complex, the cytoplasmic secretion ATPase and the periplasm-spanning pseudopilus. Interacts with core component PulG. In terms of processing, cleaved by prepilin peptidase. Methylated by prepilin peptidase at the amino group of the N-terminal phenylalanine once the leader sequence is cleaved by prepilin peptidase.

It is found in the cell inner membrane. Functionally, component of the type II secretion system required for the energy-dependent secretion of extracellular factors such as proteases and toxins from the periplasm. Part of the pseudopilus tip complex that is critical for the recognition and binding of secretion substrates. The protein is Type II secretion system protein H (pulH) of Klebsiella pneumoniae.